We begin with the raw amino-acid sequence, 325 residues long: D site-binding protein (325 aa).

Disordered regions lie at residues 1–99, 127–200, and 229–255; these read MARP…APGL, GLPP…DTVE, and RFSEEELKPQPIMKKARKIQVPEEQKD. Gly residues predominate over residues 17–28; the sequence is GPAGTPPGGGAL. 2 stretches are compositionally biased toward low complexity: residues 29–38 and 57–80; these read LGLRSLLQGT and ALPAATTPGPGLETAGPADAPAGA. S86 bears the Phosphoserine mark. Pro residues predominate over residues 129 to 153; the sequence is PPSPPPPGGPSPEPSPARTPAPSPG. The segment covering 157-167 has biased composition (low complexity); it reads CGSASPRSSPG. One can recognise a bZIP domain in the interval 255 to 318; it reads DEKYWSRRYK…SHYRAVLSRY (64 aa). The segment at 257–279 is basic motif; sequence KYWSRRYKNNEAAKRSRDARRLK. A leucine-zipper region spans residues 283 to 297; the sequence is ISVRAAFLEKENALL.

Belongs to the bZIP family. PAR subfamily. Binds DNA as a homodimer or a heterodimer. Can form a heterodimer with TEF. Ubiquitously expressed. Expressed in the suprachiasmatic nuclei (SCN) and in most peripheral tissues, with a strong circadian rhythmicity.

Its subcellular location is the nucleus. In terms of biological role, this transcriptional activator recognizes and binds to the sequence 5'-RTTAYGTAAY-3' found in the promoter of genes such as albumin, CYP2A4 and CYP2A5. It is not essential for circadian rhythm generation, but modulates important clock output genes. May be a direct target for regulation by the circadian pacemaker component clock. May affect circadian period and sleep regulation. The sequence is that of D site-binding protein (DBP) from Homo sapiens (Human).